The chain runs to 149 residues: Arginine repressor (149 aa).

This sequence belongs to the ArgR family.

It is found in the cytoplasm. It functions in the pathway amino-acid biosynthesis; L-arginine biosynthesis [regulation]. Regulates arginine biosynthesis genes. The polypeptide is Arginine repressor (Halalkalibacterium halodurans (strain ATCC BAA-125 / DSM 18197 / FERM 7344 / JCM 9153 / C-125) (Bacillus halodurans)).